We begin with the raw amino-acid sequence, 101 residues long: Small ribosomal subunit protein uS14A (101 aa).

This sequence belongs to the universal ribosomal protein uS14 family. Part of the 30S ribosomal subunit. Contacts proteins S3 and S10.

Binds 16S rRNA, required for the assembly of 30S particles and may also be responsible for determining the conformation of the 16S rRNA at the A site. This chain is Small ribosomal subunit protein uS14A, found in Salinispora tropica (strain ATCC BAA-916 / DSM 44818 / JCM 13857 / NBRC 105044 / CNB-440).